The following is a 106-amino-acid chain: Thiosulfate sulfurtransferase GlpE (106 aa).

One can recognise a Rhodanese domain in the interval 17–105 (EQGEAKLVDI…WQRAQLPIVR (89 aa)). The Cysteine persulfide intermediate role is filled by cysteine 65.

Belongs to the GlpE family.

The protein localises to the cytoplasm. It catalyses the reaction thiosulfate + hydrogen cyanide = thiocyanate + sulfite + 2 H(+). The enzyme catalyses thiosulfate + [thioredoxin]-dithiol = [thioredoxin]-disulfide + hydrogen sulfide + sulfite + 2 H(+). Functionally, transferase that catalyzes the transfer of sulfur from thiosulfate to thiophilic acceptors such as cyanide or dithiols. May function in a CysM-independent thiosulfate assimilation pathway by catalyzing the conversion of thiosulfate to sulfite, which can then be used for L-cysteine biosynthesis. This chain is Thiosulfate sulfurtransferase GlpE, found in Vibrio parahaemolyticus serotype O3:K6 (strain RIMD 2210633).